Consider the following 345-residue polypeptide: uncharacterized protein (345 aa).

2 helical membrane-spanning segments follow: residues 23 to 43 (VVGF…YSYV) and 56 to 76 (FLIA…FVAL). Positions 326-345 (VTEPTTNSKRKPVKAKKAKK) are disordered. Over residues 333-345 (SKRKPVKAKKAKK) the composition is skewed to basic residues.

The protein localises to the cell membrane. This is an uncharacterized protein from Mycoplasma pneumoniae (strain ATCC 29342 / M129 / Subtype 1) (Mycoplasmoides pneumoniae).